The sequence spans 210 residues: Large ribosomal subunit protein uL4 (210 aa).

Residues 46–89 (QGTASTLTRSEVRGGGRKPYKQKGTGRARQGSIRTPLRPGGGII) are disordered. A compositionally biased stretch (basic residues) spans 60–71 (GGRKPYKQKGTG).

It belongs to the universal ribosomal protein uL4 family. Part of the 50S ribosomal subunit.

In terms of biological role, one of the primary rRNA binding proteins, this protein initially binds near the 5'-end of the 23S rRNA. It is important during the early stages of 50S assembly. It makes multiple contacts with different domains of the 23S rRNA in the assembled 50S subunit and ribosome. Functionally, forms part of the polypeptide exit tunnel. This chain is Large ribosomal subunit protein uL4, found in Prochlorococcus marinus (strain MIT 9215).